The sequence spans 366 residues: Chorismate synthase (366 aa).

Residues R48 and R54 each contribute to the NADP(+) site. Residues R125–S127, N238–A239, G278, K293–S297, and R319 each bind FMN.

It belongs to the chorismate synthase family. Homotetramer. The cofactor is FMNH2.

The catalysed reaction is 5-O-(1-carboxyvinyl)-3-phosphoshikimate = chorismate + phosphate. It participates in metabolic intermediate biosynthesis; chorismate biosynthesis; chorismate from D-erythrose 4-phosphate and phosphoenolpyruvate: step 7/7. Its function is as follows. Catalyzes the anti-1,4-elimination of the C-3 phosphate and the C-6 proR hydrogen from 5-enolpyruvylshikimate-3-phosphate (EPSP) to yield chorismate, which is the branch point compound that serves as the starting substrate for the three terminal pathways of aromatic amino acid biosynthesis. This reaction introduces a second double bond into the aromatic ring system. In Ralstonia nicotianae (strain ATCC BAA-1114 / GMI1000) (Ralstonia solanacearum), this protein is Chorismate synthase.